The sequence spans 303 residues: BAG family molecular chaperone regulator 3 (303 aa).

Residues 1 to 11 (MMKMNTGTSPS) are compositionally biased toward polar residues. A disordered region spans residues 1-27 (MMKMNTGTSPSVIGGGTSGNEWESRPG). The region spanning 45–119 (FRVRVKYGSV…LVVKEDPISQ (75 aa)) is the Ubiquitin-like domain. The 79-residue stretch at 138–216 (SISDISFEVD…KYVEALDLLK (79 aa)) folds into the BAG domain. The disordered stretch occupies residues 249 to 268 (VEEEEEEPRNSNASSSSGTP). A compositionally biased stretch (polar residues) spans 258–267 (NSNASSSSGT). The residue at position 263 (serine 263) is a Phosphoserine.

As to quaternary structure, binds to the ATPase domain of HSP70/HSC70 chaperones. Interacts with HSP70-1.

Its function is as follows. Co-chaperone that regulates diverse cellular pathways, such as programmed cell death and stress responses. This Arabidopsis thaliana (Mouse-ear cress) protein is BAG family molecular chaperone regulator 3 (BAG3).